Here is a 281-residue protein sequence, read N- to C-terminus: MVLSEHLLVLLGAVLCAPALSDVLFRCPPCSPERLAACPGNSPRSPCAELVRAPGCGCCPVCARLEGESCGVYTARCAGGLRCYPHPGSELPLQALVLGLGTCGKRRDAEYGSSQERGTELPEDQSDNMLVDNNLVAGPAVPGDFMPRKSSKAHAVNRERANEQHRSKTNKSEDKKRPARSLCQLQLDQVLERISGMHLPDDRGPLEHLYALPIPNCDKNGFFNLKQCKMSVNGQRGECWCVNPITGKVLPGSPTVRGDPECHLFYTNPEEERRAHTQRAP.

A signal peptide spans 1-21 (MVLSEHLLVLLGAVLCAPALS). The IGFBP N-terminal domain maps to 23 to 106 (VLFRCPPCSP…VLGLGTCGKR (84 aa)). Cystine bridges form between Cys27/Cys56, Cys30/Cys58, Cys38/Cys59, Cys47/Cys62, Cys70/Cys83, and Cys77/Cys103. Disordered regions lie at residues 107–127 (RDAE…DQSD) and 139–180 (PAVP…RPAR). The span at 156–176 (VNRERANEQHRSKTNKSEDKK) shows a compositional bias: basic and acidic residues. Residues 180-262 (RSLCQLQLDQ…SPTVRGDPEC (83 aa)) enclose the Thyroglobulin type-1 domain. 3 cysteine pairs are disulfide-bonded: Cys183-Cys217, Cys228-Cys239, and Cys241-Cys262. Residues 257–259 (RGD) carry the Cell attachment site motif.

Interacts with igf1 and igf2.

It localises to the secreted. In terms of biological role, IGF-binding proteins prolong the half-life of the IGFs and have been shown to either inhibit or stimulate the growth promoting effects of the IGFs on cell culture. They alter the interaction of IGFs with their cell surface receptors. This chain is Insulin-like growth factor-binding protein 2 (igfbp2), found in Xenopus laevis (African clawed frog).